A 337-amino-acid chain; its full sequence is Protein BIG GRAIN 1-like (337 aa).

Disordered stretches follow at residues 1-32, 120-163, and 179-233; these read MRDM…PSFS, SAAG…RPAS, and KRPS…ARPS. Positions 137–146 are enriched in basic and acidic residues; sequence HEQPDVEKTA. Composition is skewed to low complexity over residues 150-163, 195-209, and 219-230; these read PGSA…RPAS, PACS…SSYA, and RTPPTTTTTARA.

This sequence belongs to the BIG GRAIN 1 (BG1) plant protein family.

Its subcellular location is the cell membrane. In terms of biological role, involved in auxin transport. Regulator of the auxin signaling pathway. This is Protein BIG GRAIN 1-like from Oryza sativa subsp. indica (Rice).